We begin with the raw amino-acid sequence, 526 residues long: Phosphoenolpyruvate carboxylase (526 aa).

The protein belongs to the PEPCase type 2 family. In terms of assembly, homotetramer. It depends on Mg(2+) as a cofactor.

The catalysed reaction is oxaloacetate + phosphate = phosphoenolpyruvate + hydrogencarbonate. In terms of biological role, catalyzes the irreversible beta-carboxylation of phosphoenolpyruvate (PEP) to form oxaloacetate (OAA), a four-carbon dicarboxylic acid source for the tricarboxylic acid cycle. The polypeptide is Phosphoenolpyruvate carboxylase (Methanosarcina mazei (strain ATCC BAA-159 / DSM 3647 / Goe1 / Go1 / JCM 11833 / OCM 88) (Methanosarcina frisia)).